The chain runs to 730 residues: Guanyl-specific ribonuclease pgl-1 (730 aa).

Positions 205-447 are involved in dimerization; that stretch reads KQLMLDGPKS…VTRIVESLEK (243 aa). Histidine 437 acts as the Proton acceptor in catalysis. Composition is skewed to polar residues over residues 452-472 and 568-595; these read DTPS…QDSA and DANQ…SPTK. 3 disordered regions span residues 452 to 475, 567 to 639, and 686 to 730; these read DTPS…AYTK, SDAN…TPMP, and GGRG…RGGF. The RNA-binding RGG-box stretch occupies residues 674–730; that stretch reads GGGRGGYGGGDRGGRGGYGGDRGGRGGYGGGDRGGRGGYGGDRGRGGYGGRGGRGGF.

Homodimer. Interacts with pgl-2 and pgl-3; this association is not required for P-granule localization of either pgl-2 or pgl-3. Interacts with ife-1. Interacts with prmt-1; the interaction is direct. Interacts with nmad-1. Interacts with P granule components meg-1, meg-3 and meg-4. Requires Does not require metal ions for catalytic activity. as cofactor. Post-translationally, methylated at arginine residues in the RNA-binding RGG-box by prmt-1. Methylation promotes P-granule degradation by autophagy. As to expression, expressed in the germline. Expressed in most somatic cells.

It is found in the cytoplasmic granule. It carries out the reaction [RNA] containing guanosine + H2O = an [RNA fragment]-3'-guanosine-3'-phosphate + a 5'-hydroxy-ribonucleotide-3'-[RNA fragment].. Not inhibited by RNase inhibitor RNasin. Guanyl-specific endoribonuclease which cleaves the phosphodiester bond in single-stranded RNA between the 3'-guanylic residue and the 5'-OH residue of adjacent nucleotide, resulting in the formation of a corresponding 2',3'-cyclic phosphate intermediate. Together with the P-granule component pgl-3, is involved in the formation of P-granules. Together with pgl-3, probably recruits other granule components such as pos-1, mex-3 and glh-1 to P-granules. In addition, may act redundantly with pgl-3 to protect germ cells from excessive germline apoptosis during normal oogenesis and development of the two gonadal arms. This may in part be through regulating the localization of sir-2.1 which is involved in germ cell apoptosis. May protect somatic cells from excessive apoptosis during normal development. Essential role in male and female postembryonic germline development; maternally provided protein maintains a population of proliferating germ cells and zygotic expression is required for correct oogenesis. This chain is Guanyl-specific ribonuclease pgl-1, found in Caenorhabditis elegans.